Consider the following 403-residue polypeptide: Phosphoglycerate kinase (403 aa).

Substrate contacts are provided by residues 21-23 (DFN), arginine 36, 59-62 (HLGR), arginine 119, and arginine 159. Residues lysine 214, glycine 301, glutamate 332, and 359 to 362 (GGDS) contribute to the ATP site.

This sequence belongs to the phosphoglycerate kinase family. Monomer.

The protein localises to the cytoplasm. The enzyme catalyses (2R)-3-phosphoglycerate + ATP = (2R)-3-phospho-glyceroyl phosphate + ADP. Its pathway is carbohydrate degradation; glycolysis; pyruvate from D-glyceraldehyde 3-phosphate: step 2/5. This is Phosphoglycerate kinase from Lactobacillus acidophilus (strain ATCC 700396 / NCK56 / N2 / NCFM).